Here is a 147-residue protein sequence, read N- to C-terminus: Large ribosomal subunit protein uL13 (147 aa).

It belongs to the universal ribosomal protein uL13 family. Part of the 50S ribosomal subunit.

This protein is one of the early assembly proteins of the 50S ribosomal subunit, although it is not seen to bind rRNA by itself. It is important during the early stages of 50S assembly. The polypeptide is Large ribosomal subunit protein uL13 (Corynebacterium diphtheriae (strain ATCC 700971 / NCTC 13129 / Biotype gravis)).